The chain runs to 446 residues: Bifunctional protein GlmU (446 aa).

The interval 1-225 is pyrophosphorylase; the sequence is MEGIILAAGK…ETEVYGVNDR (225 aa). Residues 6-9, lysine 20, glutamine 70, and 75-76 contribute to the UDP-N-acetyl-alpha-D-glucosamine site; these read LAAG and GT. Aspartate 98 lines the Mg(2+) pocket. Positions 135, 150, 165, and 223 each coordinate UDP-N-acetyl-alpha-D-glucosamine. Residue asparagine 223 coordinates Mg(2+). Residues 226–246 form a linker region; it reads VQLARLTKGVYRRKAEALMQE. An N-acetyltransferase region spans residues 247–446; that stretch reads GVTIIDPETV…RQVNKEDYVK (200 aa). Positions 328 and 346 each coordinate UDP-N-acetyl-alpha-D-glucosamine. Histidine 358 acts as the Proton acceptor in catalysis. UDP-N-acetyl-alpha-D-glucosamine contacts are provided by tyrosine 361 and asparagine 372. Residues alanine 375, 381–382, serine 400, alanine 418, and arginine 435 contribute to the acetyl-CoA site; that span reads NY.

This sequence in the N-terminal section; belongs to the N-acetylglucosamine-1-phosphate uridyltransferase family. The protein in the C-terminal section; belongs to the transferase hexapeptide repeat family. In terms of assembly, homotrimer. Requires Mg(2+) as cofactor.

Its subcellular location is the cytoplasm. It catalyses the reaction alpha-D-glucosamine 1-phosphate + acetyl-CoA = N-acetyl-alpha-D-glucosamine 1-phosphate + CoA + H(+). It carries out the reaction N-acetyl-alpha-D-glucosamine 1-phosphate + UTP + H(+) = UDP-N-acetyl-alpha-D-glucosamine + diphosphate. It functions in the pathway nucleotide-sugar biosynthesis; UDP-N-acetyl-alpha-D-glucosamine biosynthesis; N-acetyl-alpha-D-glucosamine 1-phosphate from alpha-D-glucosamine 6-phosphate (route II): step 2/2. Its pathway is nucleotide-sugar biosynthesis; UDP-N-acetyl-alpha-D-glucosamine biosynthesis; UDP-N-acetyl-alpha-D-glucosamine from N-acetyl-alpha-D-glucosamine 1-phosphate: step 1/1. It participates in bacterial outer membrane biogenesis; LPS lipid A biosynthesis. In terms of biological role, catalyzes the last two sequential reactions in the de novo biosynthetic pathway for UDP-N-acetylglucosamine (UDP-GlcNAc). The C-terminal domain catalyzes the transfer of acetyl group from acetyl coenzyme A to glucosamine-1-phosphate (GlcN-1-P) to produce N-acetylglucosamine-1-phosphate (GlcNAc-1-P), which is converted into UDP-GlcNAc by the transfer of uridine 5-monophosphate (from uridine 5-triphosphate), a reaction catalyzed by the N-terminal domain. The polypeptide is Bifunctional protein GlmU (Carboxydothermus hydrogenoformans (strain ATCC BAA-161 / DSM 6008 / Z-2901)).